The following is a 101-amino-acid chain: Putative pterin-4-alpha-carbinolamine dehydratase (101 aa).

The protein belongs to the pterin-4-alpha-carbinolamine dehydratase family.

The catalysed reaction is (4aS,6R)-4a-hydroxy-L-erythro-5,6,7,8-tetrahydrobiopterin = (6R)-L-erythro-6,7-dihydrobiopterin + H2O. This is Putative pterin-4-alpha-carbinolamine dehydratase from Rhizobium johnstonii (strain DSM 114642 / LMG 32736 / 3841) (Rhizobium leguminosarum bv. viciae).